A 389-amino-acid polypeptide reads, in one-letter code: MKKQFGKFGGQYVSKELTSTLKNLEENFFKYCNDDDFKKEYIYYLNNYIGRPSLLYYAKRLTKSLGGAKIYLKREDLNHTGAHKINNAIGQILLAKRMGKKKVIAETGAGQHGVATATAAALFGMECTIFMGEEDIKRQKLNTFKMELLGAKIKPVKSGNGTLKDAVDEAIKQWVKSSDDTFYVLGSAVGPHPYPTMVREFQKIIGEETKDQILRMEGRLPDTLIACVGGGSNAIGLFYPFIKDENIEIIGVEAGGKGVETGEHGAAFADGRVGVIHGMKTVIMEDDNGNVKEAYSISAGLDYPGVGPEHAYLNDIGRAKYVSITDEEAVEAFKYLCANEGIIPALESSHAIAYTMKLAPNMDKDKIIVVNLSGRGDKDVETISEYLNK.

An N6-(pyridoxal phosphate)lysine modification is found at Lys84.

Belongs to the TrpB family. In terms of assembly, tetramer of two alpha and two beta chains. Requires pyridoxal 5'-phosphate as cofactor.

The catalysed reaction is (1S,2R)-1-C-(indol-3-yl)glycerol 3-phosphate + L-serine = D-glyceraldehyde 3-phosphate + L-tryptophan + H2O. The protein operates within amino-acid biosynthesis; L-tryptophan biosynthesis; L-tryptophan from chorismate: step 5/5. Its function is as follows. The beta subunit is responsible for the synthesis of L-tryptophan from indole and L-serine. The sequence is that of Tryptophan synthase beta chain from Clostridium novyi (strain NT).